The primary structure comprises 433 residues: Probable RNA 3'-terminal phosphate cyclase (433 aa).

Over residues 1 to 10 (MGKNKNYNKN) the composition is skewed to low complexity. A disordered region spans residues 1 to 28 (MGKNKNYNKNQFKKSKTNNDTTVAQQQQ). The segment covering 18–28 (NNDTTVAQQQQ) has biased composition (polar residues). Residues glutamine 137 and 328 to 332 (YLQDQ) contribute to the ATP site. Histidine 354 acts as the Tele-AMP-histidine intermediate in catalysis. The interval 400–433 (LNNNNNNSNSNTTTTTTTTTISTTTIDNQNSEEK) is disordered. Low complexity predominate over residues 401–425 (NNNNNNSNSNTTTTTTTTTISTTTI).

It belongs to the RNA 3'-terminal cyclase family. Type 1 subfamily.

The protein localises to the nucleus. Its subcellular location is the nucleoplasm. The enzyme catalyses a 3'-end 3'-phospho-ribonucleotide-RNA + ATP = a 3'-end 2',3'-cyclophospho-ribonucleotide-RNA + AMP + diphosphate. Catalyzes the conversion of 3'-phosphate to a 2',3'-cyclic phosphodiester at the end of RNA. The mechanism of action of the enzyme occurs in 3 steps: (A) adenylation of the enzyme by ATP; (B) transfer of adenylate to an RNA-N3'P to produce RNA-N3'PP5'A; (C) and attack of the adjacent 2'-hydroxyl on the 3'-phosphorus in the diester linkage to produce the cyclic end product. The biological role of this enzyme is unknown but it is likely to function in some aspects of cellular RNA processing. The protein is Probable RNA 3'-terminal phosphate cyclase (rtca) of Dictyostelium discoideum (Social amoeba).